Here is a 201-residue protein sequence, read N- to C-terminus: Recombination protein RecR (201 aa).

The C4-type zinc-finger motif lies at 57 to 72; the sequence is CADCRTFTEQDICTIC. The Toprim domain maps to 81 to 176; it reads GQICVVESPA…VASRIAHGVP (96 aa).

Belongs to the RecR family.

In terms of biological role, may play a role in DNA repair. It seems to be involved in an RecBC-independent recombinational process of DNA repair. It may act with RecF and RecO. This chain is Recombination protein RecR, found in Serratia proteamaculans (strain 568).